Here is a 441-residue protein sequence, read N- to C-terminus: Tubulin alpha chain (441 aa).

Positions 11, 68, 137, 141, 142, 176, 203, and 224 each coordinate GTP. Glutamate 68 is a binding site for Mg(2+). The active site involves glutamate 250.

This sequence belongs to the tubulin family. As to quaternary structure, dimer of alpha and beta chains. A typical microtubule is a hollow water-filled tube with an outer diameter of 25 nm and an inner diameter of 15 nM. Alpha-beta heterodimers associate head-to-tail to form protofilaments running lengthwise along the microtubule wall with the beta-tubulin subunit facing the microtubule plus end conferring a structural polarity. Microtubules usually have 13 protofilaments but different protofilament numbers can be found in some organisms and specialized cells. Mg(2+) is required as a cofactor.

It is found in the cytoplasm. It localises to the cytoskeleton. It carries out the reaction GTP + H2O = GDP + phosphate + H(+). Tubulin is the major constituent of microtubules, a cylinder consisting of laterally associated linear protofilaments composed of alpha- and beta-tubulin heterodimers. Microtubules grow by the addition of GTP-tubulin dimers to the microtubule end, where a stabilizing cap forms. Below the cap, tubulin dimers are in GDP-bound state, owing to GTPase activity of alpha-tubulin. The sequence is that of Tubulin alpha chain (TUB1) from Encephalitozoon cuniculi (strain GB-M1) (Microsporidian parasite).